The following is a 352-amino-acid chain: Protein-glutamate methylesterase/protein-glutamine glutaminase (352 aa).

The Response regulatory domain occupies 5-122; the sequence is RAIVIDDSAF…SLDIRNVEDE (118 aa). Residue D56 is modified to 4-aspartylphosphate. The CheB-type methylesterase domain occupies 163 to 352; that stretch reads RSIVSIGTST…IPSLIVKQLT (190 aa). Active-site residues include S171, H198, and D294.

This sequence belongs to the CheB family. In terms of processing, phosphorylated by CheA. Phosphorylation of the N-terminal regulatory domain activates the methylesterase activity.

The protein resides in the cytoplasm. It carries out the reaction [protein]-L-glutamate 5-O-methyl ester + H2O = L-glutamyl-[protein] + methanol + H(+). It catalyses the reaction L-glutaminyl-[protein] + H2O = L-glutamyl-[protein] + NH4(+). Functionally, involved in chemotaxis. Part of a chemotaxis signal transduction system that modulates chemotaxis in response to various stimuli. Catalyzes the demethylation of specific methylglutamate residues introduced into the chemoreceptors (methyl-accepting chemotaxis proteins or MCP) by CheR. Also mediates the irreversible deamidation of specific glutamine residues to glutamic acid. This Oceanobacillus iheyensis (strain DSM 14371 / CIP 107618 / JCM 11309 / KCTC 3954 / HTE831) protein is Protein-glutamate methylesterase/protein-glutamine glutaminase.